We begin with the raw amino-acid sequence, 90 residues long: MNKNIDTVREIITVASILIKFSREDIVENRANFIAFLNEIGVTHEGRKLNQNSFRKIVSELTQEDKKTLIDEFNEGFEGVYRYLEMYTNK.

As to quaternary structure, interacts with the host sigma factor RpoD, and thereby inhibits its interaction with the catalytic core of the host RNA polymerase.

Transcriptional inhibitor. Inhibits sigma 70-directed transcription by weakening its interaction with the core of the host's RNA polymerase. This allows Gp55 to successfully compete for the core enzyme. Plays an important role during the prereplicative period of phage T4 development. The protein is 10 kDa anti-sigma factor (asiA) of Enterobacteria phage T4 (Bacteriophage T4).